The primary structure comprises 145 residues: Large ribosomal subunit protein uL14m (145 aa).

Residues 1 to 30 (MAFSSGLWGPCVHMSRAFSQRCFSTTGSLG) constitute a mitochondrion transit peptide.

Belongs to the universal ribosomal protein uL14 family. Component of the mitochondrial ribosome large subunit (39S) which comprises a 16S rRNA and about 50 distinct proteins. Interacts with MALSU1.

It is found in the mitochondrion. In terms of biological role, may form part of 2 intersubunit bridges in the assembled ribosome. Upon binding to MALSU1, intersubunit bridge formation is blocked, preventing ribosome formation and repressing translation. The sequence is that of Large ribosomal subunit protein uL14m (MRPL14) from Bos taurus (Bovine).